A 377-amino-acid polypeptide reads, in one-letter code: Apelin receptor (377 aa).

The Extracellular segment spans residues 1–28 (MEDDGYNYYGADNQSECDYADWKPSGAL). Asn-13 carries an N-linked (GlcNAc...) asparagine glycan. 2 disulfide bridges follow: Cys-17/Cys-279 and Cys-100/Cys-179. A helical transmembrane segment spans residues 29-52 (IPAIYMLVFLLGTTGNGLVLWTVF). The Cytoplasmic segment spans residues 53–62 (RTSREKRRSA). Residues 63-84 (DIFIASLAVADLTFVVTLPLWA) form a helical membrane-spanning segment. The Extracellular segment spans residues 85-97 (TYTYREFDWPFGT). A helical transmembrane segment spans residues 98–123 (FSCKLSSYLIFVNMYASVFCLTGLSF). The Cytoplasmic portion of the chain corresponds to 124–144 (DRYLAIVRPVANARLRLRVSG). The chain crosses the membrane as a helical span at residues 145–162 (AVATAVLWVLAALLAVPV). The Extracellular portion of the chain corresponds to 163–196 (MVFRSTDASENGTKIQCYMDYSMVATSNSEWAWE). Residue Asn-173 is glycosylated (N-linked (GlcNAc...) asparagine). Residues 197-221 (VGLGVSSTAVGFVVPFTIMLTCYFF) form a helical membrane-spanning segment. Residues 222–244 (IAQTIAGHFRKERIEGLRKRRRL) are Cytoplasmic-facing. The helical transmembrane segment at 245–268 (LSIIVVLVVTFALCWMPYHLVKTL) threads the bilayer. Residues 269-287 (YMLGSLLHWPCDFDIFLMN) lie on the Extracellular side of the membrane. Residues 288 to 310 (VFPYCTCISYVNSCLNPFLYAFF) form a helical membrane-spanning segment. At 311–377 (DPRFRQACTS…IPYSQETLVD (67 aa)) the chain is on the cytoplasmic side. The disordered stretch occupies residues 334 to 377 (HSSSAEKSASYSSGHSQGPGPNMGKGGEQMHEKSIPYSQETLVD). Positions 335–349 (SSSAEKSASYSSGHS) are enriched in low complexity.

This sequence belongs to the G-protein coupled receptor 1 family. As to quaternary structure, homodimer; dimerization inhibits APLNR-mediated G protein and beta-arrestin signaling pathways compared to monomeric APLNR. In terms of tissue distribution, expressed in coronary endothelial cells (at protein level). Expressed in the embryo, allantoic and endothelial precursor cells of the yolk sac at 8 days post-coitum (dpc). Expressed in the secondary heart field and somite at 8.25 dpc. Expressed in fetal allantoic endothelial cells at 9 dpc. Expressed in the allantoid and the invading fetal vasculature of the placenta at 9.5 dpc. Expressed in endothelial cells adjacent to syncytiotrophoblast cells at 10.5 dpc. Expressed weakly in the embryonic heart at 11.5 dpc. Expressed in the adult heart. Expressed in endothelial cells and cardiomyocytes and weakly expressed in fibroblasts.

It is found in the cell membrane. Its function is as follows. G protein-coupled receptor for peptide hormones apelin (APLN) and apelin receptor early endogenous ligand (APELA), that plays a role in the regulation of normal cardiovascular function and fluid homeostasis. When acting as apelin receptor, activates both G(i) protein pathway that inhibits adenylate cyclase activity, and the beta-arrestin pathway leading to internalization of the receptor. APLNR/APJ receptor is also activated by mechanical strech in a G-protein-independent fashion to induce beta-arrestin signaling leading to cardiac hypertrophy. However, the presence of apelin ligand blunts cardiac hypertrophic induction from APLNR/APJ on response to pathological stimuli. Plays a key role in early development such as gastrulation, blood vessels formation and heart morphogenesis by acting as a receptor for APELA hormone. May promote angioblast migration toward the embryonic midline, i.e. the position of the future vessel formation, during vasculogenesis. Promotes sinus venosus (SV)-derived endothelial cells migration into the developing heart to promote coronary blood vessel development. Also plays a role in various processes in adults such as regulation of blood vessel formation, blood pressure and heart contractility and protection from cardiac hypertrophy and heart failure. The chain is Apelin receptor from Mus musculus (Mouse).